The primary structure comprises 1027 residues: Kinesin heavy chain isoform 5A (1027 aa).

An N-acetylalanine modification is found at alanine 2. The Kinesin motor domain occupies 9-327; sequence SIKVLCRFRP…LMFGQRAKTI (319 aa). 86-93 is an ATP binding site; that stretch reads GQTSSGKT. Residues 174–315 are microtubule-binding; the sequence is VSSPEEILDV…PSSYNDAETK (142 aa). The necessary for interaction with ZFYVE27 stretch occupies residues 271–361; that stretch reads EGTKSYVPYR…KTKAQKETIA (91 aa). Residues 331 to 906 adopt a coiled-coil conformation; it reads ASVNLELTAE…VDRIKEAVRY (576 aa). Positions 353–1027 are interaction with BICD2; the sequence is TKAQKETIAK…FPLHQETAAS (675 aa). Threonine 397 carries the phosphothreonine modification. The segment at 906–937 is disordered; it reads YKSSGKRGHSAQIAKPVRPGHYPASSPTNPYG. Residues 907–1027 are globular; the sequence is KSSGKRGHSA…FPLHQETAAS (121 aa).

This sequence belongs to the TRAFAC class myosin-kinesin ATPase superfamily. Kinesin family. Kinesin subfamily. As to quaternary structure, oligomer composed of two heavy chains and two light chains. Interacts with GRIP1. Interacts with FMR1 (via C-terminus); this interaction is increased in a mGluR-dependent manner. Interacts with BORCS5. Interacts with ZFYVE27. Interacts with VAPA, VAPB, SURF4, RAB11A (GDP-bound form), RAB11B (GDP-bound form) and RTN3 in a ZFYVE27-dependent manner. Interacts with BICD2. Interacts with DTNB.

The protein resides in the cytoplasm. Its subcellular location is the perinuclear region. It localises to the cytoskeleton. The protein localises to the perikaryon. It catalyses the reaction ATP + H2O + a kinesin associated with a microtubule at position (n) = ADP + phosphate a kinesin associated with a microtubule at position (n+1, toward the plus end).. Its function is as follows. Microtubule-dependent motor required for slow axonal transport of neurofilament proteins (NFH, NFM and NFL). Can induce formation of neurite-like membrane protrusions in non-neuronal cells in a ZFYVE27-dependent manner. The ZFYVE27-KIF5A complex contributes to the vesicular transport of VAPA, VAPB, SURF4, RAB11A, RAB11B and RTN3 proteins in neurons. Required for anterograde axonal transportation of MAPK8IP3/JIP3 which is essential for MAPK8IP3/JIP3 function in axon elongation. The sequence is that of Kinesin heavy chain isoform 5A (Kif5a) from Mus musculus (Mouse).